We begin with the raw amino-acid sequence, 50 residues long: Small ribosomal subunit protein uS14 (50 aa).

Zn(2+)-binding residues include Cys15, Cys18, Cys33, and Cys36.

Belongs to the universal ribosomal protein uS14 family. Zinc-binding uS14 subfamily. Part of the 30S ribosomal subunit. The cofactor is Zn(2+).

Binds 16S rRNA, required for the assembly of 30S particles. In Methanothermobacter thermautotrophicus (strain ATCC 29096 / DSM 1053 / JCM 10044 / NBRC 100330 / Delta H) (Methanobacterium thermoautotrophicum), this protein is Small ribosomal subunit protein uS14.